We begin with the raw amino-acid sequence, 540 residues long: Acetyl-coenzyme A carboxylase carboxyl transferase subunit beta, chloroplastic (540 aa).

The disordered stretch occupies residues 229–249 (YSDNGSSSIRTRTSTSSGSSY). The segment covering 233 to 248 (GSSSIRTRTSTSSGSS) has biased composition (low complexity). In terms of domain architecture, CoA carboxyltransferase N-terminal spans 267–538 (LWVQCENCYA…TFHPLKSNKV (272 aa)). Positions 271, 274, 290, and 293 each coordinate Zn(2+). The C4-type zinc finger occupies 271–293 (CENCYALNYNKLFRSKMNVCEQC).

It belongs to the AccD/PCCB family. In terms of assembly, acetyl-CoA carboxylase is a heterohexamer composed of biotin carboxyl carrier protein, biotin carboxylase and 2 subunits each of ACCase subunit alpha and ACCase plastid-coded subunit beta (accD). It depends on Zn(2+) as a cofactor.

It localises to the plastid. Its subcellular location is the chloroplast stroma. The enzyme catalyses N(6)-carboxybiotinyl-L-lysyl-[protein] + acetyl-CoA = N(6)-biotinyl-L-lysyl-[protein] + malonyl-CoA. The protein operates within lipid metabolism; malonyl-CoA biosynthesis; malonyl-CoA from acetyl-CoA: step 1/1. Component of the acetyl coenzyme A carboxylase (ACC) complex. Biotin carboxylase (BC) catalyzes the carboxylation of biotin on its carrier protein (BCCP) and then the CO(2) group is transferred by the transcarboxylase to acetyl-CoA to form malonyl-CoA. This is Acetyl-coenzyme A carboxylase carboxyl transferase subunit beta, chloroplastic from Amborella trichopoda.